The sequence spans 361 residues: Phosphoserine aminotransferase (361 aa).

Arg-43 serves as a coordination point for L-glutamate. Pyridoxal 5'-phosphate contacts are provided by residues Ala-77 to Ser-78, Trp-103, Thr-153, Asp-173, and Gln-196. Lys-197 bears the N6-(pyridoxal phosphate)lysine mark. Asn-238–Thr-239 is a pyridoxal 5'-phosphate binding site.

Belongs to the class-V pyridoxal-phosphate-dependent aminotransferase family. SerC subfamily. Homodimer. The cofactor is pyridoxal 5'-phosphate.

It localises to the cytoplasm. The enzyme catalyses O-phospho-L-serine + 2-oxoglutarate = 3-phosphooxypyruvate + L-glutamate. It carries out the reaction 4-(phosphooxy)-L-threonine + 2-oxoglutarate = (R)-3-hydroxy-2-oxo-4-phosphooxybutanoate + L-glutamate. It participates in amino-acid biosynthesis; L-serine biosynthesis; L-serine from 3-phospho-D-glycerate: step 2/3. Its pathway is cofactor biosynthesis; pyridoxine 5'-phosphate biosynthesis; pyridoxine 5'-phosphate from D-erythrose 4-phosphate: step 3/5. Catalyzes the reversible conversion of 3-phosphohydroxypyruvate to phosphoserine and of 3-hydroxy-2-oxo-4-phosphonooxybutanoate to phosphohydroxythreonine. The sequence is that of Phosphoserine aminotransferase from Pseudomonas paraeruginosa (strain DSM 24068 / PA7) (Pseudomonas aeruginosa (strain PA7)).